We begin with the raw amino-acid sequence, 225 residues long: ATP-dependent dethiobiotin synthetase BioD (225 aa).

12–17 contacts ATP; it reads GVGKTV. Thr-16 provides a ligand contact to Mg(2+). Lys-37 is a catalytic residue. Thr-41 contacts substrate. Residues Asp-46, 105–108, 166–167, and 196–198 each bind ATP; these read EGAG, GS, and PEG. Positions 46 and 105 each coordinate Mg(2+).

The protein belongs to the dethiobiotin synthetase family. As to quaternary structure, homodimer. Requires Mg(2+) as cofactor.

Its subcellular location is the cytoplasm. It carries out the reaction (7R,8S)-7,8-diammoniononanoate + CO2 + ATP = (4R,5S)-dethiobiotin + ADP + phosphate + 3 H(+). The protein operates within cofactor biosynthesis; biotin biosynthesis; biotin from 7,8-diaminononanoate: step 1/2. In terms of biological role, catalyzes a mechanistically unusual reaction, the ATP-dependent insertion of CO2 between the N7 and N8 nitrogen atoms of 7,8-diaminopelargonic acid (DAPA, also called 7,8-diammoniononanoate) to form a ureido ring. The sequence is that of ATP-dependent dethiobiotin synthetase BioD from Mycobacteroides abscessus (strain ATCC 19977 / DSM 44196 / CCUG 20993 / CIP 104536 / JCM 13569 / NCTC 13031 / TMC 1543 / L948) (Mycobacterium abscessus).